Here is a 253-residue protein sequence, read N- to C-terminus: CD151 antigen (253 aa).

At 1–18 the chain is on the cytoplasmic side; sequence MGEFNEKKATCGTVCLKY. S-palmitoyl cysteine attachment occurs at residues cysteine 11 and cysteine 15. The helical transmembrane segment at 19–39 threads the bilayer; it reads LLFTYNCCFWLAGLAVMAVGI. The Extracellular portion of the chain corresponds to 40 to 57; that stretch reads WTLALKSDYISLLASSTY. The chain crosses the membrane as a helical span at residues 58-78; it reads LATAYILVVAGVVVMVTGVLG. At 79–91 the chain is on the cytoplasmic side; sequence CCATFKERRNLLR. Residues 92 to 112 form a helical membrane-spanning segment; that stretch reads LYFILLLIIFLLEIIAGILAY. At 113–221 the chain is on the extracellular side; it reads VYYQQLNTEL…LETFIQEHLR (109 aa). N-linked (GlcNAc...) asparagine glycosylation is present at asparagine 159. The helical transmembrane segment at 222–242 threads the bilayer; the sequence is VIGAVGIGIACVQVFGMIFTC. 2 S-palmitoyl cysteine lipidation sites follow: cysteine 242 and cysteine 243. Residues 243 to 253 lie on the Cytoplasmic side of the membrane; that stretch reads CLYRSLKLEHY.

Belongs to the tetraspanin (TM4SF) family. In terms of assembly, interacts with integrins ITGA3:ITGB1, ITGA5:ITGB1, ITGA3:ITGB1 and ITGA6:ITGB4 and with CD9 and CD181. Interacts (via the second extracellular domain) with integrin ITGAV:ITGB3. Interacts with ITGA3; this interaction modulates ITGA3 glycosylation pattern. Interacts with F11R. Interacts with RAC1 and CDC42; these interactions mediate physical association of RAC1 and CDC42 with integrin adhesion receptor complexes. Post-translationally, palmitoylated. Palmitoylation by ZDHHC2 regulates CD151 expression, association with other tetraspanin family proteins and function in cell adhesion. In terms of processing, ubiquitinated by RNF128 on lysine residues present in the tetraspanin amino terminus via 'Lys-48'-linked ubiquitin leading to proteasomal degradation.

The protein localises to the cell membrane. Functionally, structural component of specialized membrane microdomains known as tetraspanin-enriched microdomains (TERMs), which act as platforms for receptor clustering and signaling. Plays a role in various cellular and molecular mechanism through its association with both integrin and non-integrin proteins. These interactions facilitate critical cellular functions, including cell-to-cell communication, wound healing, platelet aggregation, trafficking, cell motility, and angiogenesis. Via interaction with JAM-A/F11R and integrin ITGA3:ITGB1, promotes the recruitment of signaling molecules such as RAC1, CDC42 and RhoGTPases to facilitate the polarization of epithelial cells and the reorganization of the actin cytoskeleton, which are critical steps in cell migration process. Regulates the glycosylation pattern of ITGA3:ITGB1 thereby modulating its activity. Plays an essential role in the maintenance of central laminin-binding integrin ITGA6:ITGB4-containing adhesion complexes. Essential for the proper assembly of the glomerular and tubular basement membranes in kidney. Contributes to T-cell activation by modulating integrin signaling leading to activation of downstream targets PTK2 and MAPK1/MAPK3. The protein is CD151 antigen (Cd151) of Mus musculus (Mouse).